The primary structure comprises 397 residues: Corticosteroid-binding globulin (397 aa).

Residues 1–22 (MSLALYTCLFWLCTSGLWTTQA) form the signal peptide. 4 N-linked (GlcNAc...) asparagine glycosylation sites follow: Asn-89, Asn-169, Asn-217, and Asn-232. Residue Gln-247 coordinates cortisol. An N-linked (GlcNAc...) asparagine glycan is attached at Asn-253. Cortisol is bound at residue Asp-279. Asn-320 carries an N-linked (GlcNAc...) asparagine glycan. Trp-385 contributes to the cortisol binding site.

It belongs to the serpin family. In terms of tissue distribution, expressed by the liver; secreted in plasma.

It localises to the secreted. In terms of biological role, major transport protein for glucocorticoids and progestins in the blood of almost all vertebrate species. In Mus musculus (Mouse), this protein is Corticosteroid-binding globulin (Serpina6).